The following is a 265-amino-acid chain: Mlc titration factor A (265 aa).

Positions 111, 148, 152, and 211 each coordinate Zn(2+).

Belongs to the MtfA family. As to quaternary structure, interacts with Mlc. Zn(2+) serves as cofactor.

It is found in the cytoplasm. In terms of biological role, involved in the modulation of the activity of the glucose-phosphotransferase system (glucose-PTS). Interacts with the transcriptional repressor Mlc, preventing its interaction with DNA and leading to the modulation of expression of genes regulated by Mlc, including ptsG, which encodes the PTS system glucose-specific EIICB component. Its function is as follows. Shows zinc-dependent metallopeptidase activity. The chain is Mlc titration factor A from Salmonella agona (strain SL483).